We begin with the raw amino-acid sequence, 124 residues long: Large ribosomal subunit protein bL12 (124 aa).

The protein belongs to the bacterial ribosomal protein bL12 family. As to quaternary structure, homodimer. Part of the ribosomal stalk of the 50S ribosomal subunit. Forms a multimeric L10(L12)X complex, where L10 forms an elongated spine to which 2 to 4 L12 dimers bind in a sequential fashion. Binds GTP-bound translation factors.

In terms of biological role, forms part of the ribosomal stalk which helps the ribosome interact with GTP-bound translation factors. Is thus essential for accurate translation. The chain is Large ribosomal subunit protein bL12 from Phytoplasma australiense.